A 624-amino-acid polypeptide reads, in one-letter code: Coagulation factor XI (624 aa).

A signal peptide spans 1–18; sequence MTSLHQVLYFIFFASVSS. Apple domains are found at residues 20 to 103, 110 to 193, 200 to 283, and 291 to 376; these read CVTK…FKQC, CSKD…LKSC, CIRD…LQHC, and CHPS…LRLC. Disulfide bonds link Cys20/Cys103, Cys46/Cys76, Cys50/Cys56, Cys110/Cys193, Cys136/Cys165, Cys140/Cys146, Cys200/Cys283, Cys226/Cys255, Cys230/Cys236, Cys291/Cys376, Cys317/Cys348, Cys321/Cys327, Cys382/Cys499, Cys415/Cys431, Cys513/Cys580, Cys544/Cys559, and Cys570/Cys598. Residues Asn90 and Asn126 are each glycosylated (N-linked (GlcNAc...) asparagine). A glycan (N-linked (GlcNAc...) asparagine) is linked at Asn297. A Peptidase S1 domain is found at 390-622; sequence VVGGAASVHG…YVDWILEKTQ (233 aa). The Charge relay system role is filled by His430. Residue Asn449 is glycosylated (N-linked (GlcNAc...) asparagine). The active-site Charge relay system is the Asp479. N-linked (GlcNAc...) asparagine glycosylation occurs at Asn490. 547–550 lines the heparin pocket; the sequence is RYRR. The active-site Charge relay system is the Ser574.

The protein belongs to the peptidase S1 family. Plasma kallikrein subfamily. In terms of assembly, homodimer; disulfide-linked. After activation the heavy and light chains are also linked by a disulfide bond. Interacts (activated) with F9 (inactive and activated) in calcium-dependent manner. Forms a heterodimer with SERPINA5. In terms of processing, activated by factor XIIa (or XII), which cleaves each polypeptide after Arg-389 into the light chain, which contains the active site, and the heavy chain, which associates with high molecular weight (HMW) kininogen. Activated by F12 (activated); the presence of negatively charged surfaces accelerates activation. Activated by F2 (thrombin); the presence of negatively charged surfaces, such as polyphosphate and dextran sulfate, strongly accelerates activation. Autoactivated; the presence of negatively charged surfaces, such as polyphosphate and dextran sulfate, accelerates autoactivation and autolysis. N-glycosylated on both chains. N-glycosylated sites mainly consist of nonfucosylated sialylated biantennary (in high abundance) and/or triantennary (in low abundance) complex structures.

The protein resides in the secreted. The catalysed reaction is Selective cleavage of Arg-|-Ala and Arg-|-Val bonds in factor IX to form factor IXa.. With respect to regulation, inhibited by SERPINA5. In terms of biological role, factor XI triggers the middle phase of the intrinsic pathway of blood coagulation by activating factor IX. The sequence is that of Coagulation factor XI (F11) from Mus musculus (Mouse).